Reading from the N-terminus, the 240-residue chain is Lysoplasmalogenase TMEM86A (240 aa).

The Cytoplasmic portion of the chain corresponds to 1–21 (MVSPVTVVKSEGPKLVPFFKA). The helical transmembrane segment at 22–42 (TCVYFVLWLPSSSPSWVSTLI) threads the bilayer. Residue K43 is a topological domain, extracellular. Residues 44-64 (CLPIFCLWLFLLAHGLGFLLA) traverse the membrane as a helical segment. Residues 65–70 (HPSATR) lie on the Cytoplasmic side of the membrane. A helical membrane pass occupies residues 71–91 (IFVGLVFSAVGDAFLIWQDQG). Y92 is a topological domain (extracellular). Residues 93-113 (FVHGLLMFAVTHMFYASAFGM) traverse the membrane as a helical segment. Over 114–115 (QP) the chain is Cytoplasmic. A helical membrane pass occupies residues 116 to 136 (LALRTGLVMAALSGLCYALLY). At 137–138 (PC) the chain is on the extracellular side. Residues 139-159 (LSGAFTYLVGVYVALIGFMGW) form a helical membrane-spanning segment. The Cytoplasmic portion of the chain corresponds to 160–174 (RAMAGLRLAGADWRW). A helical membrane pass occupies residues 175-195 (TELAAGSGALFFIISDLTIAL). The Extracellular segment spans residues 196 to 206 (NKFCFPVPYSR). The helical transmembrane segment at 207-227 (ALIMSTYYVAQMLVALSAVES) threads the bilayer. Topologically, residues 228 to 240 (REPVEHYRLTKAN) are cytoplasmic.

The protein belongs to the TMEM86 family. Expressed in the macrophages.

It is found in the endoplasmic reticulum membrane. It carries out the reaction a 1-O-(1Z-alkenyl)-sn-glycero-3-phosphocholine + H2O = a 2,3-saturated aldehyde + sn-glycerol 3-phosphocholine. The enzyme catalyses a 1-O-(1Z-alkenyl)-sn-glycero-3-phosphoethanolamine + H2O = a 2,3-saturated aldehyde + sn-glycero-3-phosphoethanolamine. Its function is as follows. Catalyzes the hydrolysis of the vinyl ether bond of choline or ethanolamine lysoplasmalogens, forming fatty aldehyde and glycerophosphocholine or glycerophosphoethanolamine, respectively and is specific for the sn-2-deacylated (lyso) form of plasmalogen. Plays an important role in lysoplasmalogen metabolism in the adipocyte tissue and macrophages. This Homo sapiens (Human) protein is Lysoplasmalogenase TMEM86A (TMEM86A).